A 347-amino-acid chain; its full sequence is GMP reductase (347 aa).

Position 108 to 131 (108 to 131 (ADFEKTQQILSQNPQLNFVCIDVA)) interacts with NADP(+). Residues Gly181 and Gly183 each contribute to the K(+) site. Cys186 (thioimidate intermediate) is an active-site residue. 216–239 (IISDGGCTMPGDVAKAFGGGADFV) is a binding site for NADP(+).

This sequence belongs to the IMPDH/GMPR family. GuaC type 1 subfamily. In terms of assembly, homotetramer.

It catalyses the reaction IMP + NH4(+) + NADP(+) = GMP + NADPH + 2 H(+). Its function is as follows. Catalyzes the irreversible NADPH-dependent deamination of GMP to IMP. It functions in the conversion of nucleobase, nucleoside and nucleotide derivatives of G to A nucleotides, and in maintaining the intracellular balance of A and G nucleotides. In Klebsiella pneumoniae subsp. pneumoniae (strain ATCC 700721 / MGH 78578), this protein is GMP reductase.